The chain runs to 683 residues: Glycine--tRNA ligase beta subunit (683 aa).

It belongs to the class-II aminoacyl-tRNA synthetase family. As to quaternary structure, tetramer of two alpha and two beta subunits.

The protein localises to the cytoplasm. It catalyses the reaction tRNA(Gly) + glycine + ATP = glycyl-tRNA(Gly) + AMP + diphosphate. This is Glycine--tRNA ligase beta subunit from Pseudomonas putida (strain GB-1).